Here is a 268-residue protein sequence, read N- to C-terminus: Probable 6-phosphogluconolactonase 1 (268 aa).

Belongs to the glucosamine/galactosamine-6-phosphate isomerase family. 6-phosphogluconolactonase subfamily.

The protein localises to the cytoplasm. Its subcellular location is the cytosol. It catalyses the reaction 6-phospho-D-glucono-1,5-lactone + H2O = 6-phospho-D-gluconate + H(+). It participates in carbohydrate degradation; pentose phosphate pathway; D-ribulose 5-phosphate from D-glucose 6-phosphate (oxidative stage): step 2/3. In terms of biological role, catalyzes the hydrolysis of 6-phosphogluconolactone to 6-phosphogluconate. The sequence is that of Probable 6-phosphogluconolactonase 1 from Arabidopsis thaliana (Mouse-ear cress).